The chain runs to 312 residues: Malate dehydrogenase (312 aa).

NAD(+)-binding positions include 12–17 and Asp-36; that span reads GAGFTG. Substrate is bound by residues Arg-87 and Arg-93. Residues Asn-100 and 123–125 each bind NAD(+); that span reads LTN. Asn-125 contributes to the substrate binding site. Residue Ser-149 is modified to Phosphoserine. Residue Arg-156 coordinates substrate. The active-site Proton acceptor is the His-180.

The protein belongs to the LDH/MDH superfamily. MDH type 3 family.

It carries out the reaction (S)-malate + NAD(+) = oxaloacetate + NADH + H(+). Functionally, catalyzes the reversible oxidation of malate to oxaloacetate. In Bacillus cytotoxicus (strain DSM 22905 / CIP 110041 / 391-98 / NVH 391-98), this protein is Malate dehydrogenase.